The following is an 86-amino-acid chain: Large ribosomal subunit protein bL27 (86 aa).

Residues 1 to 22 (MATKKAGGSSRNGRDSAGRRLG) are disordered.

The protein belongs to the bacterial ribosomal protein bL27 family.

This chain is Large ribosomal subunit protein bL27, found in Rickettsia bellii (strain RML369-C).